Reading from the N-terminus, the 464-residue chain is Cytoplasmic tRNA 2-thiolation protein 2 (464 aa).

The protein belongs to the CTU2/NCS2 family.

Its subcellular location is the cytoplasm. It participates in tRNA modification; 5-methoxycarbonylmethyl-2-thiouridine-tRNA biosynthesis. In terms of biological role, plays a central role in 2-thiolation of mcm(5)S(2)U at tRNA wobble positions of tRNA(Lys), tRNA(Glu) and tRNA(Gln). May act by forming a heterodimer with NCS6/CTU1 that ligates sulfur from thiocarboxylated URM1 onto the uridine of tRNAs at wobble position. This chain is Cytoplasmic tRNA 2-thiolation protein 2, found in Oryza sativa subsp. japonica (Rice).